Here is a 313-residue protein sequence, read N- to C-terminus: MSSTNQSSVTEFLLLGLSRQPQQQQLLFLLFLIMYLATVLGNLLIILAIGTDSRLHTPMYFFLSNLSFVDVCFSSTTVPKVLANHILGSQAISFSGCLTQLYFLAVFGNMDNFLLAVMSYDRFVAICHPLHYTTKMTRQLCVLLVVGSWVVANMNCLLHILLMARLSFCADNMIPHFFCDGTPLLKLSCSDTHLNELMILTEGAVVMVTPFVCILISYIHITCAVLRVSSPRGGWKSFSTCGSHLAVVCLFYGTVIAVYFNPSSSHLAGRDMAAAVMYAVVTPMLNPFIYSLRNSDMKAALRKVLAMRFPSKQ.

The Extracellular portion of the chain corresponds to 1–25 (MSSTNQSSVTEFLLLGLSRQPQQQQ). N-linked (GlcNAc...) asparagine glycosylation occurs at Asn5. The helical transmembrane segment at 26 to 50 (LLFLLFLIMYLATVLGNLLIILAIG) threads the bilayer. At 51-57 (TDSRLHT) the chain is on the cytoplasmic side. The chain crosses the membrane as a helical span at residues 58–79 (PMYFFLSNLSFVDVCFSSTTVP). At 80-100 (KVLANHILGSQAISFSGCLTQ) the chain is on the extracellular side. A disulfide bond links Cys97 and Cys189. The chain crosses the membrane as a helical span at residues 101–120 (LYFLAVFGNMDNFLLAVMSY). At 121-139 (DRFVAICHPLHYTTKMTRQ) the chain is on the cytoplasmic side. The helical transmembrane segment at 140 to 158 (LCVLLVVGSWVVANMNCLL) threads the bilayer. Topologically, residues 159 to 196 (HILLMARLSFCADNMIPHFFCDGTPLLKLSCSDTHLNE) are extracellular. Residues 197–219 (LMILTEGAVVMVTPFVCILISYI) form a helical membrane-spanning segment. At 220–236 (HITCAVLRVSSPRGGWK) the chain is on the cytoplasmic side. Residues 237–260 (SFSTCGSHLAVVCLFYGTVIAVYF) traverse the membrane as a helical segment. At 261 to 272 (NPSSSHLAGRDM) the chain is on the extracellular side. Residues 273–292 (AAAVMYAVVTPMLNPFIYSL) form a helical membrane-spanning segment. The Cytoplasmic portion of the chain corresponds to 293–313 (RNSDMKAALRKVLAMRFPSKQ).

The protein belongs to the G-protein coupled receptor 1 family. In terms of tissue distribution, olfactory epithelium.

Its subcellular location is the cell membrane. In terms of biological role, odorant receptor. The protein is Olfactory receptor 1f45 (Or1f45) of Rattus norvegicus (Rat).